Reading from the N-terminus, the 465-residue chain is 28S rRNA (cytosine-C(5))-methyltransferase (465 aa).

G2 carries the post-translational modification N-acetylglycine. S167 carries the phosphoserine modification. Residues 234–240, D258, R263, and D305 contribute to the S-adenosyl-L-methionine site; that span reads CAAPGNK. Residue C359 is the Nucleophile of the active site. Residues 430–465 form a disordered region; it reads TPAPQTDAMDPEPLSQVPKRKRRRKAAVGASMQPST.

The protein belongs to the class I-like SAM-binding methyltransferase superfamily. RsmB/NOP family. As to expression, in the hippocampus, specifically expressed in adult hippocampal NG2-positive oligodendrocyte precursor cells (at protein level).

The protein localises to the nucleus. It is found in the nucleolus. The catalysed reaction is a cytidine in 28S rRNA + S-adenosyl-L-methionine = a 5-methylcytidine in 28S rRNA + S-adenosyl-L-homocysteine + H(+). Functionally, S-adenosyl-L-methionine-dependent methyltransferase that specifically methylates the C(5) position of cytosine 3438 (m5C3438) in 28S rRNA. m5C3782 promotes protein translation without affecting ribosome biogenesis and fidelity. Required for corpus callosum and cerebral cortex development. The sequence is that of 28S rRNA (cytosine-C(5))-methyltransferase from Mus musculus (Mouse).